The sequence spans 200 residues: Holliday junction branch migration complex subunit RuvA (200 aa).

Residues 1 to 63 are domain I; sequence MFEYLTGLIT…EDAITLFGFA (63 aa). A domain II region spans residues 64 to 142; it reads TQAEKRLFTQ…AVQDEVQLDF (79 aa). The tract at residues 143 to 151 is flexible linker; the sequence is TAPGPLGPS. The segment at 151–200 is domain III; sequence SAALQDALAALESLGYTTKQVERVQKQLEGLQGELSTNDYLSQGLKLLSR.

This sequence belongs to the RuvA family. In terms of assembly, homotetramer. Forms an RuvA(8)-RuvB(12)-Holliday junction (HJ) complex. HJ DNA is sandwiched between 2 RuvA tetramers; dsDNA enters through RuvA and exits via RuvB. An RuvB hexamer assembles on each DNA strand where it exits the tetramer. Each RuvB hexamer is contacted by two RuvA subunits (via domain III) on 2 adjacent RuvB subunits; this complex drives branch migration. In the full resolvosome a probable DNA-RuvA(4)-RuvB(12)-RuvC(2) complex forms which resolves the HJ.

The protein resides in the cytoplasm. The RuvA-RuvB-RuvC complex processes Holliday junction (HJ) DNA during genetic recombination and DNA repair, while the RuvA-RuvB complex plays an important role in the rescue of blocked DNA replication forks via replication fork reversal (RFR). RuvA specifically binds to HJ cruciform DNA, conferring on it an open structure. The RuvB hexamer acts as an ATP-dependent pump, pulling dsDNA into and through the RuvAB complex. HJ branch migration allows RuvC to scan DNA until it finds its consensus sequence, where it cleaves and resolves the cruciform DNA. The sequence is that of Holliday junction branch migration complex subunit RuvA from Limosilactobacillus fermentum (strain NBRC 3956 / LMG 18251) (Lactobacillus fermentum).